Here is a 163-residue protein sequence, read N- to C-terminus: Peptide methionine sulfoxide reductase MsrA (163 aa).

Cysteine 10 is an active-site residue.

Belongs to the MsrA Met sulfoxide reductase family.

The enzyme catalyses L-methionyl-[protein] + [thioredoxin]-disulfide + H2O = L-methionyl-(S)-S-oxide-[protein] + [thioredoxin]-dithiol. It catalyses the reaction [thioredoxin]-disulfide + L-methionine + H2O = L-methionine (S)-S-oxide + [thioredoxin]-dithiol. Has an important function as a repair enzyme for proteins that have been inactivated by oxidation. Catalyzes the reversible oxidation-reduction of methionine sulfoxide in proteins to methionine. This is Peptide methionine sulfoxide reductase MsrA from Ruthia magnifica subsp. Calyptogena magnifica.